Reading from the N-terminus, the 102-residue chain is MKSSPHLVLILCLQAALVMGVFAALAKENAMVESKAIDINPGQLKCCTNCNFSFSGLYTCDDVKKDCDPVCKKCVVAVHASYSGNNKFRCTDTFLGMCGPKC.

Positions 1–15 (MKSSPHLVLILCLQA) are cleaved as a signal peptide. Intrachain disulfides connect cysteine 46–cysteine 102, cysteine 47–cysteine 60, cysteine 50–cysteine 98, cysteine 67–cysteine 74, and cysteine 71–cysteine 90.

It belongs to the Bowman-Birk serine protease inhibitor family.

The chain is Bowman-Birk type wound-induced proteinase inhibitor WIP1 (WIP1) from Zea mays (Maize).